A 141-amino-acid chain; its full sequence is Large ribosomal subunit protein uL11 (141 aa).

The protein belongs to the universal ribosomal protein uL11 family. Part of the ribosomal stalk of the 50S ribosomal subunit. Interacts with L10 and the large rRNA to form the base of the stalk. L10 forms an elongated spine to which L12 dimers bind in a sequential fashion forming a multimeric L10(L12)X complex. Post-translationally, one or more lysine residues are methylated.

Forms part of the ribosomal stalk which helps the ribosome interact with GTP-bound translation factors. The chain is Large ribosomal subunit protein uL11 from Fusobacterium nucleatum subsp. nucleatum (strain ATCC 25586 / DSM 15643 / BCRC 10681 / CIP 101130 / JCM 8532 / KCTC 2640 / LMG 13131 / VPI 4355).